A 243-amino-acid polypeptide reads, in one-letter code: Peptidyl-tRNA hydrolase (243 aa).

Tyrosine 14 is a binding site for tRNA. The active-site Proton acceptor is histidine 19. TRNA contacts are provided by phenylalanine 64, asparagine 66, and asparagine 112. A compositionally biased stretch (basic and acidic residues) spans 190–205; sequence KAEEEKPAKEMKDAGK. Positions 190–243 are disordered; it reads KAEEEKPAKEMKDAGKKPASQSHIHQARNHNQPKLPATGPMADMLKKMFGKKGD. Over residues 208–221 the composition is skewed to polar residues; sequence ASQSHIHQARNHNQ.

This sequence belongs to the PTH family. Monomer.

It is found in the cytoplasm. It catalyses the reaction an N-acyl-L-alpha-aminoacyl-tRNA + H2O = an N-acyl-L-amino acid + a tRNA + H(+). In terms of biological role, hydrolyzes ribosome-free peptidyl-tRNAs (with 1 or more amino acids incorporated), which drop off the ribosome during protein synthesis, or as a result of ribosome stalling. Functionally, catalyzes the release of premature peptidyl moieties from peptidyl-tRNA molecules trapped in stalled 50S ribosomal subunits, and thus maintains levels of free tRNAs and 50S ribosomes. This is Peptidyl-tRNA hydrolase from Rhizobium johnstonii (strain DSM 114642 / LMG 32736 / 3841) (Rhizobium leguminosarum bv. viciae).